Here is an 857-residue protein sequence, read N- to C-terminus: Catalase-peroxidase (857 aa).

The tryptophyl-tyrosyl-methioninium (Trp-Tyr) (with M-356) cross-link spans W207–Y330. Catalysis depends on H208, which acts as the Proton acceptor. The tryptophyl-tyrosyl-methioninium (Tyr-Met) (with W-207) cross-link spans Y330–M356. H371 is a heme b binding site.

Belongs to the peroxidase family. Peroxidase/catalase subfamily. As to quaternary structure, homodimer or homotetramer. It depends on heme b as a cofactor. Post-translationally, formation of the three residue Trp-Tyr-Met cross-link is important for the catalase, but not the peroxidase activity of the enzyme.

It carries out the reaction H2O2 + AH2 = A + 2 H2O. The enzyme catalyses 2 H2O2 = O2 + 2 H2O. Functionally, bifunctional enzyme with both catalase and broad-spectrum peroxidase activity. The sequence is that of Catalase-peroxidase from Rhodopirellula baltica (strain DSM 10527 / NCIMB 13988 / SH1).